The primary structure comprises 183 residues: Peptidyl-tRNA hydrolase (183 aa).

TRNA is bound at residue Tyr14. His19 acts as the Proton acceptor in catalysis. Residues Phe64 and Asn66 each coordinate tRNA.

Belongs to the PTH family. In terms of assembly, monomer.

The protein localises to the cytoplasm. The enzyme catalyses an N-acyl-L-alpha-aminoacyl-tRNA + H2O = an N-acyl-L-amino acid + a tRNA + H(+). Hydrolyzes ribosome-free peptidyl-tRNAs (with 1 or more amino acids incorporated), which drop off the ribosome during protein synthesis, or as a result of ribosome stalling. Functionally, catalyzes the release of premature peptidyl moieties from peptidyl-tRNA molecules trapped in stalled 50S ribosomal subunits, and thus maintains levels of free tRNAs and 50S ribosomes. The sequence is that of Peptidyl-tRNA hydrolase from Syntrophomonas wolfei subsp. wolfei (strain DSM 2245B / Goettingen).